The chain runs to 159 residues: Vesicle transport protein SFT2A (159 aa).

Residues 1 to 36 are Cytoplasmic-facing; that stretch reads MEKLRRVLSGQDDEEQGLTAQVLDASSLSFNTRLKW. S9 carries the phosphoserine modification. A helical transmembrane segment spans residues 37–57; that stretch reads FVICFVAGIFFSFLGTGLLWL. Residues 58-62 lie on the Lumenal side of the membrane; the sequence is PNGMK. A helical membrane pass occupies residues 63 to 83; the sequence is LFAVFYTLGNLAALASTCFLM. The Cytoplasmic segment spans residues 84–97; the sequence is GPVKQLKKMFETTR. A helical membrane pass occupies residues 98-118; it reads LLATIIMLLCLVFTLCAALWW. Residues 119 to 122 lie on the Lumenal side of the membrane; the sequence is RKKG. The helical transmembrane segment at 123–143 threads the bilayer; the sequence is LALLFCILQFLSMTWYSLSYI. At 144-159 the chain is on the cytoplasmic side; the sequence is PYARDAVLKCCSSLLG.

This sequence belongs to the SFT2 family.

Its subcellular location is the membrane. In terms of biological role, may be involved in fusion of retrograde transport vesicles derived from an endocytic compartment with the Golgi complex. In Mus musculus (Mouse), this protein is Vesicle transport protein SFT2A.